Here is a 283-residue protein sequence, read N- to C-terminus: Transmembrane protein 119 (283 aa).

A signal peptide spans Met1–Ala25. Residues Arg26–Met96 are Extracellular-facing. Ser41 carries an O-linked (Xyl...) (chondroitin sulfate) serine glycan. The segment covering Glu43–Pro52 has biased composition (low complexity). The interval Glu43–Gly76 is disordered. Residues Leu97 to Ile117 traverse the membrane as a helical segment. The Cytoplasmic segment spans residues Thr118–Val283. 2 disordered regions span residues Lys136–Ser168 and Leu183–Val283. 2 stretches are compositionally biased toward basic and acidic residues: residues Val153–Glu164 and Arg198–Gln213. Positions Gly238 to Gln264 are enriched in low complexity. A Phosphoserine modification is found at Ser272.

Interacts with SMAD1, SMAD5 and RUNX2. Expressed in brain microglia (at protein level). Detected in urine (at protein level). Elevated expression levels seen in the brain of patients with Alzheimer disease. Expressed by osteoblast-like cells in bone tissues and follicular dendritic cells in lymphoid tissues.

It localises to the cell membrane. It is found in the cytoplasm. The protein resides in the endoplasmic reticulum membrane. The protein localises to the secreted. Functionally, plays an important role in bone formation and normal bone mineralization. Promotes the differentiation of myoblasts into osteoblasts. May induce the commitment and differentiation of myoblasts into osteoblasts through an enhancement of BMP2 production and interaction with the BMP-RUNX2 pathway. Up-regulates the expression of ATF4, a transcription factor which plays a central role in osteoblast differentiation. Essential for normal spermatogenesis and late testicular differentiation. This chain is Transmembrane protein 119 (TMEM119), found in Homo sapiens (Human).